A 57-amino-acid polypeptide reads, in one-letter code: Phospholipase A2 superbin b (57 aa).

Residues Y28, G30, and G32 each contribute to the Ca(2+) site. C29 and C45 are joined by a disulfide. The active site involves H48. Ca(2+) is bound at residue D49.

Requires Ca(2+) as cofactor. In terms of tissue distribution, expressed by the venom gland.

It is found in the secreted. It catalyses the reaction a 1,2-diacyl-sn-glycero-3-phosphocholine + H2O = a 1-acyl-sn-glycero-3-phosphocholine + a fatty acid + H(+). Snake venom phospholipase A2 (PLA2) that inhibits collagen-induced platelet aggregation. In terms of inhibition of platelet aggregation, superbin b is more potent as superbin c, and d. PLA2 catalyzes the calcium-dependent hydrolysis of the 2-acyl groups in 3-sn-phosphoglycerides. The sequence is that of Phospholipase A2 superbin b from Austrelaps superbus (Lowland copperhead snake).